The chain runs to 427 residues: WD repeat and SOCS box-containing protein 1 (427 aa).

5 WD repeats span residues 129-170, 173-213, 217-256, 259-298, and 314-353; these read SRSI…LLLN, DHTD…NMVK, GHPN…LIRK, GHHN…ILLE, and ANDR…PQAV. Positions 379–427 constitute an SOCS box domain; the sequence is SVHFWECPRSIASLQHLCRMALRRVKTTQQVEALPVPMPLRDFLTYRVV.

As to quaternary structure, component of a probable ECS E3 ubiquitin-protein ligase complex that contains the Elongin BC complex.

It functions in the pathway protein modification; protein ubiquitination. In terms of biological role, probable substrate-recognition component of a SCF-like ECS (Elongin-Cullin-SOCS-box protein) E3 ubiquitin-protein ligase complex which mediates the ubiquitination and subsequent proteasomal degradation of target proteins. This is WD repeat and SOCS box-containing protein 1 (wsb1) from Takifugu rubripes (Japanese pufferfish).